Reading from the N-terminus, the 31-residue chain is Cytochrome b6-f complex subunit 6 (31 aa).

Residues 3 to 23 (ILINYFLLVGFCFALASGLFL) form a helical membrane-spanning segment.

Belongs to the PetL family. As to quaternary structure, the 4 large subunits of the cytochrome b6-f complex are cytochrome b6, subunit IV (17 kDa polypeptide, PetD), cytochrome f and the Rieske protein, while the 4 small subunits are PetG, PetL, PetM and PetN. The complex functions as a dimer.

The protein localises to the plastid. It is found in the chloroplast thylakoid membrane. Its function is as follows. Component of the cytochrome b6-f complex, which mediates electron transfer between photosystem II (PSII) and photosystem I (PSI), cyclic electron flow around PSI, and state transitions. PetL is important for photoautotrophic growth as well as for electron transfer efficiency and stability of the cytochrome b6-f complex. The chain is Cytochrome b6-f complex subunit 6 from Thalassiosira pseudonana (Marine diatom).